The primary structure comprises 470 residues: 6-phospho-beta-glucosidase BglB (470 aa).

Glu-172 (proton donor) is an active-site residue. The Nucleophile role is filled by Glu-361.

This sequence belongs to the glycosyl hydrolase 1 family.

It catalyses the reaction 6-phospho-beta-D-glucosyl-(1-&gt;4)-D-glucose + H2O = D-glucose 6-phosphate + D-glucose. Catalyzes the hydrolysis of phosphorylated beta-glucosides into glucose-6-phosphate (G-6-P) and aglycone. It has a high affinity for phosphorylated aromatic beta-glucosides (p-nitrophenyl-beta-glucoside, phenyl beta-glucoside, arbutin and phosphorylated salicin), and a low affinity for phosphorylated beta-methyl-glucoside. The polypeptide is 6-phospho-beta-glucosidase BglB (bglB) (Escherichia coli (strain K12)).